The following is a 519-amino-acid chain: AarF domain-containing protein kinase 1 (519 aa).

A Protein kinase domain is found at 145–481 (SFEDTPLGAA…SLYRRVHISL (337 aa)). ATP contacts are provided by residues 151–159 (LGAASLAQV) and Lys-173. Catalysis depends on Asp-305, which acts as the Proton acceptor.

The protein belongs to the protein kinase superfamily. ADCK protein kinase family.

It localises to the mitochondrion. Its function is as follows. Appears to be essential for maintaining mitochondrial cristae formation and mitochondrial function by acting via YME1L1 in a kinase-independent manner to regulate essential mitochondrial structural proteins OPA1 and IMMT. The action of this enzyme is not yet clear. It is not known if it has protein kinase activity and what type of substrate it would phosphorylate (Ser, Thr or Tyr). The polypeptide is AarF domain-containing protein kinase 1 (ADCK1) (Gallus gallus (Chicken)).